We begin with the raw amino-acid sequence, 490 residues long: Glycine--tRNA ligase (490 aa).

Residues arginine 99 and glutamate 163 each coordinate substrate. ATP contacts are provided by residues 195–197 (RNE), 205–210 (FRTREF), 282–283 (EL), and 326–329 (GLTR). Substrate is bound at residue 210–214 (FEQME). 322-326 (EPAAG) contacts substrate. The tract at residues 470 to 490 (PVEMGGEPWPESGVQEAGGLY) is disordered.

This sequence belongs to the class-II aminoacyl-tRNA synthetase family. In terms of assembly, homodimer.

Its subcellular location is the cytoplasm. The enzyme catalyses tRNA(Gly) + glycine + ATP = glycyl-tRNA(Gly) + AMP + diphosphate. Functionally, catalyzes the attachment of glycine to tRNA(Gly). This Bifidobacterium longum (strain NCC 2705) protein is Glycine--tRNA ligase.